Consider the following 361-residue polypeptide: Phosphoserine aminotransferase (361 aa).

R43 contributes to the L-glutamate binding site. Residues 77 to 78 (AS), W103, T153, D173, and Q196 contribute to the pyridoxal 5'-phosphate site. K197 bears the N6-(pyridoxal phosphate)lysine mark. 238 to 239 (NT) is a pyridoxal 5'-phosphate binding site.

It belongs to the class-V pyridoxal-phosphate-dependent aminotransferase family. SerC subfamily. Homodimer. The cofactor is pyridoxal 5'-phosphate.

It localises to the cytoplasm. It carries out the reaction O-phospho-L-serine + 2-oxoglutarate = 3-phosphooxypyruvate + L-glutamate. It catalyses the reaction 4-(phosphooxy)-L-threonine + 2-oxoglutarate = (R)-3-hydroxy-2-oxo-4-phosphooxybutanoate + L-glutamate. It functions in the pathway amino-acid biosynthesis; L-serine biosynthesis; L-serine from 3-phospho-D-glycerate: step 2/3. It participates in cofactor biosynthesis; pyridoxine 5'-phosphate biosynthesis; pyridoxine 5'-phosphate from D-erythrose 4-phosphate: step 3/5. Its function is as follows. Catalyzes the reversible conversion of 3-phosphohydroxypyruvate to phosphoserine and of 3-hydroxy-2-oxo-4-phosphonooxybutanoate to phosphohydroxythreonine. This is Phosphoserine aminotransferase from Pseudomonas fluorescens (strain SBW25).